A 193-amino-acid polypeptide reads, in one-letter code: MLANLDRYKIVLASNSPRRKELMTGLGVDYVVKTLPDVDESYPDTLQGEEIPLFIAREKAAAYQSMIGPEELLITADTIVWHEGKALGKPVGRQDAIEMLRSLSGKSHQVITGVCVTTREWQKCFAAVTDVRFAILDEDEIAYYVDHYQPMDKAGSYGVQEWIGFVGVESISGSYFNVMGLPIQKLYRELKQL.

Asp77 acts as the Proton acceptor in catalysis.

The protein belongs to the Maf family. YhdE subfamily. Requires a divalent metal cation as cofactor.

It is found in the cytoplasm. The enzyme catalyses dTTP + H2O = dTMP + diphosphate + H(+). It catalyses the reaction UTP + H2O = UMP + diphosphate + H(+). Its function is as follows. Nucleoside triphosphate pyrophosphatase that hydrolyzes dTTP and UTP. May have a dual role in cell division arrest and in preventing the incorporation of modified nucleotides into cellular nucleic acids. The chain is dTTP/UTP pyrophosphatase from Bacteroides fragilis (strain YCH46).